The sequence spans 141 residues: uncharacterized protein (141 aa).

The next 2 membrane-spanning stretches (helical) occupy residues 12 to 32 and 35 to 55; these read GIAG…TLVT and PGRV…SATW.

It localises to the cell membrane. This is an uncharacterized protein from Mycobacterium tuberculosis (strain CDC 1551 / Oshkosh).